The sequence spans 1891 residues: MTSRLLETGSTPFIRNTAAQQLADVQKQHPDELFNLLGRILPYLRSKSWDTRAAAAKAIGLIVANADTFDPNQDDGQEIKKAENDDLDVDIKSEEELLSPMDDSLLQLERLDLPSILKYGKRLLGSAGKEYEYSLAAMDPASRLQHQKKTLTSRLGLAGEYIEEDLINDNDLVSKPVVKEEPSFVASREHSIQGTSQPLASPIEPANGEESGLSKRQLNQLKRKNKQSARMGANKVRVVDLSSRRASENVTTPSVATPYPIKSENGEERNGDSKPDYFSLDRSAGDDESKIVSEFKGASVPENPLLQPESTEEGPNPNWPFELMCDILMVDLFDPNWEIRHGAAMALREVIRIQGAGAGRVQGKSRAENDILNRKWLDDLACRLLCVLMLDRFGDYISDNVVAPIRETVGQTLGALLSQLPSRSVISVYKCLYRIIMQTDLGLERPIWEVCHGGMIGLRYLVAVRKDLLIKDSKLMDGVLEAVMKGLGDYDDDVRAVSAATLVPIAEEFVKTRQSTLGTLMTIVWDCLSNLQDDLSASTGSVMDLLAKLCTFQEVLDAMKANAAVNPESSFGKLVPRLYPFLRHTITSVRSAVLRALMTFLQLEGEGTDEWVDGKTVRLIFQNLLVERNEGVLKQSLQVWSELLNSLETRGSFKSESDLLSHIKPLITLSMGPFGVPRYPVPMDASLFIKPSGLPFPSSAAAPARSSPASNTPEGTKGRRRKSEKKEAPPPSAHNVDGHMLQGDIDLVGADTMLRSKIYAARALGQLLFVWDQNQLPSLWQSILEGLNHSASTSQLASAMIVEEYAKLSGPSGRYASTLCENLRPIIEGERPPWYSDIACYLHVARAQCHSLLNTFRDHAHVPGSRLPVLAVIVQGDPEAGPNAFSLSDAEKVIGPDFERLKKGLTPAQRITALQVLNDTRATAESAVNEARNAREQRDLRVRAAAAGALVALSDIPKKPSHIIKGMMDSIKKEENAELQQRSATAITSLVEYYTTSAKRGPVDKVIGNLVKYCCVDTSETPEFHHNAMLEKSILSLRKEEDRRDHPDAAKFEREAKEARIMRRGAKEALEQLAVKFGSELMAKVPNLASLIERPLKEALAADELPANIRDPENELGQEVVDGLSTLRAILPKFHSGLYPWVVDLLPLVVKALQCNLSVIRYAAAKCFATICSVITVEGMTMLVEKVLPMINDALDVHHRQGAVECIYHLIHVMEDGILPYVIFLVVPVLGRMSDSDNEVRLLATTSFATLVKLVPLEAGIPDPPGLSEELLKGRDRERQFMAQMLDVRKVEEFKIPVAIKAELRPYQQEGVNWLAFLNRYNLHGILCDDMGLGKTLQTICIVASDHHMRAEEFARTQKPEVRKLPSLIVCPPSLSGHWQQELKQYAPFLNCVAYVGPPAERSRLQSALPNADIVVTSYDICRNDNEVLNPINWNYCVLDEGHLIKNPKAKATIAVKRLLSNHRLILSGTPIQNNVLELWSLFDFLMPGFLGTEKVFLDRFAKPIAASRFSKSSSKEQEAGALAIEALHKQVLPFLLRRLKEEVLNDLPPKIIQNYYCDPSELQRKLFEDFTKKEQKALQDKVGSTEKADKEHIFQALQYMRRLCNSPALVVKEGHKQYNEVQQYLAAKHSNIRDVAHAPKLSALRDLLIDCGIGVDSPSEGDLSGASYVSPHRALIFCQMKEMLDIVQSEVFNKLLPSVQFLRLDGSVEATRRQDIVNRFNTDPSYDVLLLTTSVGGLGLNLTGADTVIFVEHDWNPQKDIQAMDRAHRIGQKKVVNVYRLITRGTLEEKILNLQRFKIDVASTVVNQQNAGLGTMDTDQLLDLFNLGETAETAEKPSDAAGNEVDMVDIDGNVKEKGKKGWLDDLGELWDDRQYQEEYNLDSFLATMKG.

The stretch at 30-68 is one HEAT 1 repeat; that stretch reads PDELFNLLGRILPYLRSKSWDTRAAAAKAIGLIVANADT. Disordered stretches follow at residues 184–216, 241–283, and 295–316; these read FVAS…LSKR, LSSR…LDRS, and FKGA…EGPN. A compositionally biased stretch (basic and acidic residues) spans 264–275; it reads ENGEERNGDSKP. HEAT repeat units follow at residues 473–511 and 569–606; these read SKLM…EFVK and SSFG…LEGE. Residues 699-710 are compositionally biased toward low complexity; the sequence is SAAAPARSSPAS. Positions 699–740 are disordered; sequence SAAAPARSSPASNTPEGTKGRRRKSEKKEAPPPSAHNVDGHM. HEAT repeat units follow at residues 957 to 996, 1139 to 1177, 1181 to 1216, and 1219 to 1257; these read PKKP…YYTT, YPWV…VITV, TMLV…VMED, and LPYV…LVPL. Residues 1316-1489 enclose the Helicase ATP-binding domain; that stretch reads AFLNRYNLHG…WSLFDFLMPG (174 aa). 1329–1336 provides a ligand contact to ATP; the sequence is DDMGLGKT. The DEAH box signature appears at 1440–1443; the sequence is DEGH. Residues 1526–1565 form an HEAT 8 repeat; it reads EALHKQVLPFLLRRLKEEVLNDLPPKIIQNYYCDPSELQR. The Helicase C-terminal domain occupies 1663–1813; the sequence is DLSGASYVSP…STVVNQQNAG (151 aa).

This sequence belongs to the SNF2/RAD54 helicase family. Forms the NCT transcriptional regulatory complex with nctA and nctB.

The protein resides in the nucleus. Its function is as follows. Regulates transcription in association with TATA binding protein (TBP). Removes TBP from the TATA box via its C-terminal ATPase activity. Both transcription activation and repression require its ATPase activity. Part of the NCT transcriptional regulatory complex that acts as a key regulator of ergosterol biosynthesis and the azole exporter cdr1B. The NCT complex binds the promoters of genes linked to azole susceptibility, and especially represses the expression of cdr1B transporter. The chain is TATA-binding protein-associated factor mot1 from Aspergillus fumigatus (strain ATCC MYA-4609 / CBS 101355 / FGSC A1100 / Af293) (Neosartorya fumigata).